Reading from the N-terminus, the 176-residue chain is MTMCSGARLALLVYGILMHSSVYGSPAASGLRFPGIRPENEVYDEDGNPQQDFYDSESLGVGSPASALRDAYALYYPAEERDVAHGILNKAYRKVLDQPSARRSPADAHGQGLGWDPGGSADDDSEPLSKRHSDGIFTDSYSRYRKQMAVKKYLAAVLGKRYKQRVKNKGRRIPYL.

An N-terminal signal peptide occupies residues 1–24; it reads MTMCSGARLALLVYGILMHSSVYG. The propeptide occupies 25–80; that stretch reads SPAASGLRFPGIRPENEVYDEDGNPQQDFYDSESLGVGSPASALRDAYALYYPAEE. The segment at 98–135 is disordered; that stretch reads QPSARRSPADAHGQGLGWDPGGSADDDSEPLSKRHSDG. The tract at residues 150–158 is important for receptor binding; it reads VKKYLAAVL. A Leucine amide modification is found at leucine 158. Lysine 169 bears the Lysine amide mark. The propeptide occupies 173 to 176; the sequence is IPYL.

The protein belongs to the glucagon family. As to quaternary structure, interacts with ADCYAP1R1 (via N-terminal extracellular domain); both PACAP27 and PACAP38 neuropeptides function as ligand for the ADCYAP1R1 receptor, which modulates the activity of downstream effectors. Interacts with VIPR1 and VIPR2; functions as ligand for VIPR1 and VIPR2 receptors, which modulate the activity of downstream effectors.

It is found in the secreted. PACAP is a neuropeptide involved in diverse array of physiological processes through activating the PACAP subfamily of class B1 G protein-coupled receptors: VIP receptor 1 (VIPR1), VIP receptor 2 (VIPR2), and PACAP type I receptor (ADCYAP1R1). Exerts neuroprotective and general cytoprotective effects due to anti-apoptotic, anti-inflammatory, and antioxidant actions. Promotes neuron projection development through the RAPGEF2/Rap1/B-Raf/ERK pathway. In chromaffin cells, induces long-lasting increase of intracellular calcium concentrations and neuroendocrine secretion. Involved in the control of glucose homeostasis, induces insulin secretion by pancreatic beta cells. PACAP exists in two bioactive forms from proteolysis of the same precursor protein, PACAP27 and PACAP38, which differ by eleven amino acid residues in the C-terminus. The protein is Pituitary adenylate cyclase-activating polypeptide (ADCYAP1) of Bos taurus (Bovine).